A 131-amino-acid chain; its full sequence is Profilin-7 (131 aa).

An intrachain disulfide couples cysteine 13 to cysteine 115. Residues 81 to 97 (AVIRGKKGSGGITVKKT) carry the Involved in PIP2 interaction motif. Phosphothreonine is present on threonine 111.

Belongs to the profilin family. Occurs in many kinds of cells as a complex with monomeric actin in a 1:1 ratio. Post-translationally, phosphorylated by MAP kinases.

The protein resides in the cytoplasm. It localises to the cytoskeleton. Its function is as follows. Binds to actin and affects the structure of the cytoskeleton. At high concentrations, profilin prevents the polymerization of actin, whereas it enhances it at low concentrations. This is Profilin-7 from Zea mays (Maize).